Reading from the N-terminus, the 773-residue chain is 4'-phosphopantetheine phosphatase (773 aa).

Ala2 carries the post-translational modification N-acetylalanine. The segment at 2–402 (AECGASGSGS…SPELGPAQRA (401 aa)) is pantothenate kinase. Acetyl-CoA contacts are provided by Ser196 and Ser199. Tyr320 is subject to 3'-nitrotyrosine. Phosphoserine occurs at positions 393 and 404. The 4'-phosphopantetheine phosphatase stretch occupies residues 403 to 773 (RSGTFDLLEM…VIFKYEVPAE (371 aa)). At Thr406 the chain carries Phosphothreonine. 3 residues coordinate Mn(2+): Asp623, Asn624, and Asp659. Residues 724–728 (EGMGR) carry the Subfamily II EGMGR motif motif.

The protein in the N-terminal section; belongs to the type II pantothenate kinase family. It in the C-terminal section; belongs to the damage-control phosphatase family. Phosphopantetheine phosphatase II subfamily. As to quaternary structure, homodimer. Interacts with PKM. Requires Mn(2+) as cofactor. It depends on Ni(2+) as a cofactor. Widely expressed with high expression in the muscle. Expressed in the retina and lens epithelium, mainly in ganglion cell layer, outer plexiform layer and retinal pigment layer (at protein level).

The protein resides in the cytoplasm. It carries out the reaction (R)-4'-phosphopantetheine + H2O = (R)-pantetheine + phosphate. The catalysed reaction is (R)-4'-phosphopantetheine sulfonate + H2O = (R)-pantetheine sulfonate + phosphate. The enzyme catalyses (R)-4'-phospho-S-sulfopantetheine + H2O = (R)-S-sulfopantetheine + phosphate. Its activity is regulated as follows. Activity is strongly promoted by Co(2+), Ni(2+), Mg(2+) and Mn(2+). Activity is inhibited by EDTA. In terms of biological role, phosphatase which shows a preference for 4'-phosphopantetheine and its oxidatively damaged forms (sulfonate or S-sulfonate), providing strong indirect evidence that the phosphatase activity pre-empts damage in the coenzyme A (CoA) pathway. Hydrolyzing excess 4'-phosphopantetheine could constitute a directed overflow mechanism to prevent its oxidation to the S-sulfonate, sulfonate, or other forms. Hydrolyzing 4'-phosphopantetheine sulfonate or S-sulfonate would forestall their conversion to inactive forms of CoA and acyl carrier protein. May play a role in the physiological regulation of CoA intracellular levels. This chain is 4'-phosphopantetheine phosphatase, found in Homo sapiens (Human).